The chain runs to 615 residues: Dihydroxy-acid dehydratase (615 aa).

A Mg(2+)-binding site is contributed by Asp83. Cys124 serves as a coordination point for [2Fe-2S] cluster. 2 residues coordinate Mg(2+): Asp125 and Lys126. Lys126 carries the post-translational modification N6-carboxylysine. Cys199 is a binding site for [2Fe-2S] cluster. Residue Glu495 participates in Mg(2+) binding. Ser521 (proton acceptor) is an active-site residue.

The protein belongs to the IlvD/Edd family. As to quaternary structure, homodimer. [2Fe-2S] cluster is required as a cofactor. Mg(2+) serves as cofactor.

The catalysed reaction is (2R)-2,3-dihydroxy-3-methylbutanoate = 3-methyl-2-oxobutanoate + H2O. It carries out the reaction (2R,3R)-2,3-dihydroxy-3-methylpentanoate = (S)-3-methyl-2-oxopentanoate + H2O. It participates in amino-acid biosynthesis; L-isoleucine biosynthesis; L-isoleucine from 2-oxobutanoate: step 3/4. The protein operates within amino-acid biosynthesis; L-valine biosynthesis; L-valine from pyruvate: step 3/4. Functionally, functions in the biosynthesis of branched-chain amino acids. Catalyzes the dehydration of (2R,3R)-2,3-dihydroxy-3-methylpentanoate (2,3-dihydroxy-3-methylvalerate) into 2-oxo-3-methylpentanoate (2-oxo-3-methylvalerate) and of (2R)-2,3-dihydroxy-3-methylbutanoate (2,3-dihydroxyisovalerate) into 2-oxo-3-methylbutanoate (2-oxoisovalerate), the penultimate precursor to L-isoleucine and L-valine, respectively. In Corynebacterium jeikeium (strain K411), this protein is Dihydroxy-acid dehydratase.